The chain runs to 287 residues: ATP synthase gamma chain (287 aa).

It belongs to the ATPase gamma chain family. F-type ATPases have 2 components, CF(1) - the catalytic core - and CF(0) - the membrane proton channel. CF(1) has five subunits: alpha(3), beta(3), gamma(1), delta(1), epsilon(1). CF(0) has three main subunits: a, b and c.

The protein resides in the cell inner membrane. Its function is as follows. Produces ATP from ADP in the presence of a proton gradient across the membrane. The gamma chain is believed to be important in regulating ATPase activity and the flow of protons through the CF(0) complex. The protein is ATP synthase gamma chain of Xanthomonas axonopodis pv. citri (strain 306).